Here is a 297-residue protein sequence, read N- to C-terminus: Transcription factor PCF8 (297 aa).

A disordered region spans residues 1–22; the sequence is MEEVVGGGKERKRPRGALVGVG. The TCP domain maps to 46 to 104; it reads GKDRHSKVVTSRGLRDRRVRLSVPTAIAFYDIQDRLGVDQPSKAIEWLIRAAAAAIDAL. Disordered regions lie at residues 116–136 and 273–297; these read AASSPPPPAADDAEVSTSETS and AAPAATTNGGERRLQLWDFKEERKT. Residues 282–297 are compositionally biased toward basic and acidic residues; that stretch reads GERRLQLWDFKEERKT.

Forms homodimers and heterodimers.

Its subcellular location is the nucleus. Its function is as follows. Transcription activator. Binds the promoter core sequence 5'-GGNCC-3'. This Oryza sativa subsp. indica (Rice) protein is Transcription factor PCF8 (PCF8).